The sequence spans 450 residues: tRNA-2-methylthio-N(6)-dimethylallyladenosine synthase (450 aa).

The MTTase N-terminal domain maps to 7–127 (KRLYIKTYGC…LPELIARAHR (121 aa)). Positions 16, 52, 90, 165, 169, and 172 each coordinate [4Fe-4S] cluster. In terms of domain architecture, Radical SAM core spans 151 to 378 (QVSGVSAFLT…NQLLDEQQKA (228 aa)). A TRAM domain is found at 381–443 (ILQVGKTMPV…KMSLGGVLET (63 aa)).

Belongs to the methylthiotransferase family. MiaB subfamily. In terms of assembly, monomer. The cofactor is [4Fe-4S] cluster.

Its subcellular location is the cytoplasm. It carries out the reaction N(6)-dimethylallyladenosine(37) in tRNA + (sulfur carrier)-SH + AH2 + 2 S-adenosyl-L-methionine = 2-methylsulfanyl-N(6)-dimethylallyladenosine(37) in tRNA + (sulfur carrier)-H + 5'-deoxyadenosine + L-methionine + A + S-adenosyl-L-homocysteine + 2 H(+). Catalyzes the methylthiolation of N6-(dimethylallyl)adenosine (i(6)A), leading to the formation of 2-methylthio-N6-(dimethylallyl)adenosine (ms(2)i(6)A) at position 37 in tRNAs that read codons beginning with uridine. This Caulobacter sp. (strain K31) protein is tRNA-2-methylthio-N(6)-dimethylallyladenosine synthase.